A 360-amino-acid polypeptide reads, in one-letter code: Putative beta-glucosidase 15 (360 aa).

Basic and acidic residues-rich tracts occupy residues 1-11 (MARRRMGEEGK) and 47-67 (GRREEDDAGGREKGEKRERKG). Disordered stretches follow at residues 1–21 (MARRRMGEEGKGGGWGLNGRQ) and 35–103 (GWRS…RAER). A compositionally biased stretch (basic residues) spans 75–86 (GKRRRERRRGGR). Y183 lines the a beta-D-glucoside pocket. C191 and C196 are oxidised to a cystine. Residues E254, W301, 308-309 (EW), and F317 contribute to the a beta-D-glucoside site. E254 functions as the Nucleophile in the catalytic mechanism. An N-linked (GlcNAc...) asparagine glycan is attached at N346.

The protein belongs to the glycosyl hydrolase 1 family.

It carries out the reaction Hydrolysis of terminal, non-reducing beta-D-glucosyl residues with release of beta-D-glucose.. The sequence is that of Putative beta-glucosidase 15 (BGLU15) from Oryza sativa subsp. japonica (Rice).